A 768-amino-acid polypeptide reads, in one-letter code: Gephyrin (768 aa).

The tract at residues 14–166 (QIRVGVLTVS…LPGSKKGSQE (153 aa)) is MPT Mo-transferase. Residues 153–348 (LIINLPGSKK…VDITKVARRH (196 aa)) are interaction with GABARAP. Disordered stretches follow at residues 194–245 (DELE…DSSS) and 273–316 (TASL…ASRV). A compositionally biased stretch (pro residues) spans 200 to 212 (PSPPPPLSPPPTT). Phosphoserine occurs at positions 201 and 207. Threonine 211 bears the Phosphothreonine mark. Serine 213 carries the post-translational modification Phosphoserine. A lipid anchor (S-palmitoyl cysteine) is attached at cysteine 225. Over residues 274 to 299 (ASLSTTPSESPRAQATSRLSTASCPT) the composition is skewed to polar residues. Residue serine 275 is modified to Phosphoserine. 2 positions are modified to phosphothreonine: threonine 278 and threonine 279. A phosphoserine mark is found at serine 281 and serine 283. Cysteine 297 carries the S-palmitoyl cysteine lipid modification. Residues 326–768 (SSKENILRAS…VVDVMVIGRL (443 aa)) are MPT adenylyltransferase. Serine 337 carries the phosphoserine modification.

It in the N-terminal section; belongs to the MoaB/Mog family. In the C-terminal section; belongs to the MoeA family. Homotrimer, homodimer and homooligomer. Interacts with SRGAP2 (via SH3 domain). Interacts with GLRB. Interacts with GABARAP. Interacts with GABRA3. GABRA3 and GLRB occupy overlapping binding sites. Interacts with ARHGAP32; IQSEC3, INSYN1 and INSYN2A. Mg(2+) serves as cofactor. In terms of processing, phosphorylated. Palmitoylated. Palmitoylation is stimulated by GABA type A receptors activity. Palmitoylation by ZDHHC12 regulates clustering at synapses. Expressed in tissues including spinal cord, brain, liver, kidney and lung.

The protein localises to the postsynaptic cell membrane. It localises to the cell membrane. Its subcellular location is the cytoplasm. The protein resides in the cytosol. It is found in the cytoskeleton. The protein localises to the cell projection. It localises to the dendrite. Its subcellular location is the postsynaptic density. It carries out the reaction molybdopterin + ATP + H(+) = adenylyl-molybdopterin + diphosphate. The enzyme catalyses adenylyl-molybdopterin + molybdate = Mo-molybdopterin + AMP + H(+). Its pathway is cofactor biosynthesis; molybdopterin biosynthesis. With respect to regulation, inhibited by copper and tungsten. Functionally, microtubule-associated protein involved in membrane protein-cytoskeleton interactions. It is thought to anchor the inhibitory glycine receptor (GLYR) to subsynaptic microtubules. Acts as a major instructive molecule at inhibitory synapses, where it also clusters GABA type A receptors. In terms of biological role, also has a catalytic activity and catalyzes two steps in the biosynthesis of the molybdenum cofactor. In the first step, molybdopterin is adenylated. Subsequently, molybdate is inserted into adenylated molybdopterin and AMP is released. The sequence is that of Gephyrin (Gphn) from Rattus norvegicus (Rat).